A 253-amino-acid polypeptide reads, in one-letter code: 5'-nucleotidase SurE (253 aa).

Positions 8, 9, 39, and 92 each coordinate a divalent metal cation.

The protein belongs to the SurE nucleotidase family. The cofactor is a divalent metal cation.

It localises to the cytoplasm. The enzyme catalyses a ribonucleoside 5'-phosphate + H2O = a ribonucleoside + phosphate. Its function is as follows. Nucleotidase that shows phosphatase activity on nucleoside 5'-monophosphates. The polypeptide is 5'-nucleotidase SurE (Burkholderia pseudomallei (strain 668)).